Reading from the N-terminus, the 809-residue chain is Quinate/shikimate dehydrogenase (quinone) (809 aa).

5 helical membrane passes run 14–34 (VWCFILGLALLITGAFYVIGG), 41–61 (GGSWYFLIAGLMITTSAFFMF), 68–88 (VWLYALAFIGTVIWALIDAGF), 90–110 (FWPLHSRLMFPAGLFAAVMLT), and 127–147 (AYVIGGLTVLGMLGGLYGMFI).

The protein belongs to the bacterial PQQ dehydrogenase family. It depends on pyrroloquinoline quinone as a cofactor.

The protein localises to the cell membrane. It catalyses the reaction L-quinate + a quinone = 3-dehydroquinate + a quinol. It carries out the reaction shikimate + a quinone = 3-dehydroshikimate + a quinol. It participates in aromatic compound metabolism; 3,4-dihydroxybenzoate biosynthesis; 3-dehydroquinate from D-quinate (PQQ route): step 1/1. In terms of biological role, can act either on quinate or on shikimate. The polypeptide is Quinate/shikimate dehydrogenase (quinone) (quiA) (Acinetobacter baylyi (strain ATCC 33305 / BD413 / ADP1)).